Here is a 448-residue protein sequence, read N- to C-terminus: Adenylosuccinate synthetase (448 aa).

GTP contacts are provided by residues 36-42 (GDEGKGK) and 64-66 (GHT). Asp37 acts as the Proton acceptor in catalysis. The Mg(2+) site is built by Asp37 and Gly64. Residues 37–40 (DEGK), 62–65 (NAGH), Thr154, Arg168, Asn246, Thr261, and Arg325 each bind IMP. The active-site Proton donor is the His65. 321-327 (VTTKRKR) is a binding site for substrate. GTP is bound by residues Arg327, 353–355 (KLD), and 436–438 (GVG).

Belongs to the adenylosuccinate synthetase family. In terms of assembly, homodimer. The cofactor is Mg(2+).

The protein localises to the cytoplasm. The enzyme catalyses IMP + L-aspartate + GTP = N(6)-(1,2-dicarboxyethyl)-AMP + GDP + phosphate + 2 H(+). It participates in purine metabolism; AMP biosynthesis via de novo pathway; AMP from IMP: step 1/2. Functionally, plays an important role in the de novo pathway and in the salvage pathway of purine nucleotide biosynthesis. Catalyzes the first committed step in the biosynthesis of AMP from IMP. This Drosophila virilis (Fruit fly) protein is Adenylosuccinate synthetase.